Reading from the N-terminus, the 224-residue chain is Protein GrpE (224 aa).

Residues Met-1 to Leu-72 form a disordered region. Positions Glu-10–Pro-19 are enriched in polar residues. Over residues Asn-20–Glu-67 the composition is skewed to basic and acidic residues.

The protein belongs to the GrpE family. As to quaternary structure, homodimer.

It localises to the cytoplasm. Functionally, participates actively in the response to hyperosmotic and heat shock by preventing the aggregation of stress-denatured proteins, in association with DnaK and GrpE. It is the nucleotide exchange factor for DnaK and may function as a thermosensor. Unfolded proteins bind initially to DnaJ; upon interaction with the DnaJ-bound protein, DnaK hydrolyzes its bound ATP, resulting in the formation of a stable complex. GrpE releases ADP from DnaK; ATP binding to DnaK triggers the release of the substrate protein, thus completing the reaction cycle. Several rounds of ATP-dependent interactions between DnaJ, DnaK and GrpE are required for fully efficient folding. The protein is Protein GrpE of Parageobacillus thermoglucosidasius (Geobacillus thermoglucosidasius).